The sequence spans 124 residues: uncharacterized protein (124 aa).

Residues Met1–Thr22 form the signal peptide.

This is an uncharacterized protein from Caenorhabditis elegans.